The following is a 233-amino-acid chain: Short chain dehydrogenase trt9 (233 aa).

NADP(+) is bound by residues Asp-33, Arg-95, Tyr-127, Lys-131, and Val-160. The active-site Proton donor is the Tyr-127. Lys-131 serves as the catalytic Lowers pKa of active site Tyr.

The protein belongs to the short-chain dehydrogenases/reductases (SDR) family.

It participates in secondary metabolite biosynthesis; terpenoid biosynthesis. Functionally, short chain dehydrogenase; part of the gene cluster that mediates the biosynthesis of terretonin, a fungal meroterpenoid that acts as a mycotoxin. The first step of the pathway is the synthesis of 3,5-dimethylorsellinic acid (DMOA) by the polyketide synthase trt4. DMOA is then prenylated into farnesyl-DMOA by the polyprenyl transferase trt2. Methylation by the methyltransferase trt5 then leads to farnesyl-DMOA methyl ester which is further subject to epoxidation by the FAD-dependent monooxygenase trt8 to yield epoxyfarnesyl-DMOA methyl ester. Cyclization of epoxyfarnesyl-DMOA methyl ester by the terpene cyclase trt1 leads to a tetracycle intermediate which is in turn converted to preterretonin. Dehydrogenase trt9 comes next to transform preterretonin to preterrenoid. The FAD-dependent monooxygenase trt3 is then required for the C-hydroxylation at C16 of preterrenoid to yield terrenoid. The cytochrome P450 trt6 catalyzes three successive oxidations to transform terrenoid into an unstable intermediate, which then undergoes the D-ring expansion and unusual rearrangement of the methoxy group to afford the core skeleton of terretonin. Trt14 catalyzes the D-ring expansion of terretonin involving intramolecular methoxy rearrangement as well as the hydrolysis of the expanded D-ring and the methyl ester moiety. Finally, the nonheme iron-dependent dioxygenase trt7 accomplishes the last two oxidation reactions steps to complete the biosynthesis of terretonin. Terretonin C is produced via spontaneous decarboxylation of the terretonin precursor. Another shunt product of the terretonin biosynthesis is dihydrofarnesyl-DMOA, derived from epoxyfarnesyl-DMOA through hydrolysis of the epoxide. This is Short chain dehydrogenase trt9 from Aspergillus terreus (strain NIH 2624 / FGSC A1156).